Consider the following 539-residue polypeptide: Probable elastin-binding protein EbpS (539 aa).

Residues 1–14 (MSKNNFRDDFEKNR) are compositionally biased toward basic and acidic residues. Residues 1-324 (MSKNNFRDDF…EDGNDGFQAH (324 aa)) form a disordered region. The span at 21 to 34 (DQFEDNTNEFDENS) shows a compositional bias: acidic residues. The span at 35–52 (NESNDFDNQSDQQFPPRN) shows a compositional bias: low complexity. The span at 53–69 (AQRRQRRRNQATNKNRK) shows a compositional bias: basic residues. Residues 70–81 (FGNQNSDSNANG) show a composition bias toward polar residues. Composition is skewed to basic and acidic residues over residues 100–176 (QENH…DQQN), 210–226 (EHHD…RDLN), and 233–259 (QNRK…EPKK). The segment covering 266-283 (AAVGAGAAGAAGAAGVAA) has biased composition (low complexity). Over residues 291–317 (KNNNHKDNHSHNRDHQDDHRNHKHEDG) the composition is skewed to basic and acidic residues. Residues 335–355 (ILLPLIALLLILAALAIFIGM) traverse the membrane as a helical segment. Composition is skewed to basic and acidic residues over residues 362-371 (KDSNQADNKT) and 378-417 (DNNK…KATT). The disordered stretch occupies residues 362–491 (KDSNQADNKT…NSSNSGQQTH (130 aa)). The span at 418 to 490 (DNDSSNNSSD…SNSSNSGQQT (73 aa)) shows a compositional bias: low complexity. The 49-residue stretch at 489-537 (QTHVVSGNENLYRIAIQYYGEGTVENVNKLKQANGLSSNNISNGQKLII) folds into the LysM domain.

It localises to the cell membrane. This is Probable elastin-binding protein EbpS (ebpS) from Staphylococcus haemolyticus (strain JCSC1435).